The following is a 977-amino-acid chain: Bifunctional glutamine synthetase adenylyltransferase/adenylyl-removing enzyme (977 aa).

The tract at residues 1-457 (MRLPLPSDLP…HFRQVIADPD (457 aa)) is adenylyl removase. The segment at 468-977 (GGEWSPLWEQ…RRIWGELGLS (510 aa)) is adenylyl transferase.

Belongs to the GlnE family. Mg(2+) serves as cofactor.

The catalysed reaction is [glutamine synthetase]-O(4)-(5'-adenylyl)-L-tyrosine + phosphate = [glutamine synthetase]-L-tyrosine + ADP. The enzyme catalyses [glutamine synthetase]-L-tyrosine + ATP = [glutamine synthetase]-O(4)-(5'-adenylyl)-L-tyrosine + diphosphate. Involved in the regulation of glutamine synthetase GlnA, a key enzyme in the process to assimilate ammonia. When cellular nitrogen levels are high, the C-terminal adenylyl transferase (AT) inactivates GlnA by covalent transfer of an adenylyl group from ATP to specific tyrosine residue of GlnA, thus reducing its activity. Conversely, when nitrogen levels are low, the N-terminal adenylyl removase (AR) activates GlnA by removing the adenylyl group by phosphorolysis, increasing its activity. The regulatory region of GlnE binds the signal transduction protein PII (GlnB) which indicates the nitrogen status of the cell. This is Bifunctional glutamine synthetase adenylyltransferase/adenylyl-removing enzyme from Pseudomonas putida (strain ATCC 47054 / DSM 6125 / CFBP 8728 / NCIMB 11950 / KT2440).